The sequence spans 194 residues: dCTP deaminase (194 aa).

Residues 110–115 (RSSLAR), D128, 136–138 (VLE), Y171, K178, and Q182 contribute to the dCTP site. The active-site Proton donor/acceptor is the E138.

The protein belongs to the dCTP deaminase family. As to quaternary structure, homotrimer.

It catalyses the reaction dCTP + H2O + H(+) = dUTP + NH4(+). It functions in the pathway pyrimidine metabolism; dUMP biosynthesis; dUMP from dCTP (dUTP route): step 1/2. In terms of biological role, catalyzes the deamination of dCTP to dUTP. This chain is dCTP deaminase, found in Mannheimia succiniciproducens (strain KCTC 0769BP / MBEL55E).